A 289-amino-acid chain; its full sequence is MEHTPRNAGFALPAAYMSTMTSSFIDFLKAEAPDLLPRARVENMPAVPGGGSAFEPPHGTTIVASTFNGGVLIAGDRRATTGNTIASRDLEKVYVTDAYSAVGIAGTAGIALELVRLYTVELAHYEKIEGVSLSLDGKANKLANMVKGNLDGALAGLAVLPLFVGYDIDADDPKRAGRIVSFDVTGGRYEENAGYHAIGSGAVYAKSSLKKLYDPEADADTAVRTAIEALYDAADDDTATGGPDLVRRIYPTVVTITAEHGAVMLPQEETASIAESVVRERSERPGQLG.

Positions 1-59 (MEHTPRNAGFALPAAYMSTMTSSFIDFLKAEAPDLLPRARVENMPAVPGGGSAFEPPHG) are cleaved as a propeptide — removed in mature form; by autocatalysis. The Nucleophile role is filled by Thr-60.

Belongs to the peptidase T1B family. As to quaternary structure, the 20S proteasome core is composed of 14 alpha and 14 beta subunits that assemble into four stacked heptameric rings, resulting in a barrel-shaped structure. The two inner rings, each composed of seven catalytic beta subunits, are sandwiched by two outer rings, each composed of seven alpha subunits. The catalytic chamber with the active sites is on the inside of the barrel. Has a gated structure, the ends of the cylinder being occluded by the N-termini of the alpha-subunits. Is capped by the proteasome-associated ATPase, ARC.

Its subcellular location is the cytoplasm. The enzyme catalyses Cleavage of peptide bonds with very broad specificity.. It functions in the pathway protein degradation; proteasomal Pup-dependent pathway. Its activity is regulated as follows. The formation of the proteasomal ATPase ARC-20S proteasome complex, likely via the docking of the C-termini of ARC into the intersubunit pockets in the alpha-rings, may trigger opening of the gate for substrate entry. Interconversion between the open-gate and close-gate conformations leads to a dynamic regulation of the 20S proteasome proteolysis activity. Functionally, component of the proteasome core, a large protease complex with broad specificity involved in protein degradation. The sequence is that of Proteasome subunit beta from Saccharomonospora viridis (strain ATCC 15386 / DSM 43017 / JCM 3036 / CCUG 5913 / NBRC 12207 / NCIMB 9602 / P101) (Thermoactinomyces viridis).